The sequence spans 360 residues: DNA replication and repair protein RecF (360 aa).

30–37 (GVNGAGKT) lines the ATP pocket.

The protein belongs to the RecF family.

The protein localises to the cytoplasm. In terms of biological role, the RecF protein is involved in DNA metabolism; it is required for DNA replication and normal SOS inducibility. RecF binds preferentially to single-stranded, linear DNA. It also seems to bind ATP. This Thioalkalivibrio sulfidiphilus (strain HL-EbGR7) protein is DNA replication and repair protein RecF.